We begin with the raw amino-acid sequence, 392 residues long: Erythronate-4-phosphate dehydrogenase (392 aa).

Substrate is bound by residues Ser-48 and Thr-69. An NAD(+)-binding site is contributed by Asp-149. Arg-215 is a catalytic residue. Asp-239 contributes to the NAD(+) binding site. Glu-244 is an active-site residue. His-261 (proton donor) is an active-site residue. Position 264 (Gly-264) interacts with NAD(+). Tyr-265 contributes to the substrate binding site.

Belongs to the D-isomer specific 2-hydroxyacid dehydrogenase family. PdxB subfamily. Homodimer.

It is found in the cytoplasm. It carries out the reaction 4-phospho-D-erythronate + NAD(+) = (R)-3-hydroxy-2-oxo-4-phosphooxybutanoate + NADH + H(+). The protein operates within cofactor biosynthesis; pyridoxine 5'-phosphate biosynthesis; pyridoxine 5'-phosphate from D-erythrose 4-phosphate: step 2/5. Functionally, catalyzes the oxidation of erythronate-4-phosphate to 3-hydroxy-2-oxo-4-phosphonooxybutanoate. This Salinibacter ruber (strain DSM 13855 / M31) protein is Erythronate-4-phosphate dehydrogenase.